A 278-amino-acid chain; its full sequence is MFKILRKERLAPGINLFEIESPRIAKHAKPGQFVMIRLHEKGERIPLTIADVDISKGSITIVAQEVGKTTRELGTYEAGDYILDVLGPLGKPSHIDYFGTVVMIGGGVGVAEIYPVAKAMKEKGNYVISILGFRTKDLVFWEDKLRSVSDEVIVTTNDGSYGMKGFTTHALQKLIEEGRKIDLVHAVGPAIMMKAVAELTKPYGIKTVASLNPIMVDGTGMCGACRVTVGGEVKFACVDGPEFDAHLVDWDQLMNRLAYYRDLEKISLEKWERERRMV.

The propeptide occupies 1 to 4; sequence MFKI. One can recognise an FAD-binding FR-type domain in the interval 1 to 95; the sequence is MFKILRKERL…LGPLGKPSHI (95 aa). Residues Cys-222, Cys-225, and Cys-237 each contribute to the [2Fe-2S] cluster site.

Heterodimer of alpha and beta subunits. FAD is required as a cofactor. [2Fe-2S] cluster serves as cofactor.

It localises to the cytoplasm. It catalyses the reaction n sulfur + hydrogen sulfide + NADP(+) = (n+1) sulfur + NADPH. The enzyme catalyses 2 reduced [2Fe-2S]-[ferredoxin] + NADP(+) + H(+) = 2 oxidized [2Fe-2S]-[ferredoxin] + NADPH. In terms of biological role, a bifunctional enzyme that catalyzes the reduction of elemental sulfur or polysulfide to hydrogen sulfide with NADPH as electron donor. Also functions as a reduced ferredoxin:NADP oxidoreductase with a very high affinity for reduced ferredoxin. Exhibits a broad specificity for various physiological and non-physiological substrates with varied reduction potentials such as methyl viologen, benzyl viologen, FAD, FMN, methylene blue, 2,6-dichlorophenolindophenol (DCIP), cytochrome C and ferricyanide with highest preference for benzyl viologen. Does not reduce fumarate, succinate, nitrate, nitrite, sulfate, sulfite or protons. Does not possess any hydrogenase activity or NADPH-dependent glutamate synthase activity. This is Sulfide dehydrogenase subunit beta from Pyrococcus furiosus (strain ATCC 43587 / DSM 3638 / JCM 8422 / Vc1).